Consider the following 238-residue polypeptide: Peptidyl-tRNA hydrolase (238 aa).

A tRNA-binding site is contributed by tyrosine 14. Histidine 19 serves as the catalytic Proton acceptor. TRNA is bound by residues tyrosine 64, asparagine 66, and asparagine 112. Residues 202 to 225 (PAAQSHIHQARNSAQPKKLPETGP) are disordered. Positions 207 to 216 (HIHQARNSAQ) are enriched in polar residues.

This sequence belongs to the PTH family. Monomer.

The protein resides in the cytoplasm. It catalyses the reaction an N-acyl-L-alpha-aminoacyl-tRNA + H2O = an N-acyl-L-amino acid + a tRNA + H(+). In terms of biological role, hydrolyzes ribosome-free peptidyl-tRNAs (with 1 or more amino acids incorporated), which drop off the ribosome during protein synthesis, or as a result of ribosome stalling. Catalyzes the release of premature peptidyl moieties from peptidyl-tRNA molecules trapped in stalled 50S ribosomal subunits, and thus maintains levels of free tRNAs and 50S ribosomes. The sequence is that of Peptidyl-tRNA hydrolase from Agrobacterium fabrum (strain C58 / ATCC 33970) (Agrobacterium tumefaciens (strain C58)).